The chain runs to 549 residues: Undecaprenyl phosphate-alpha-4-amino-4-deoxy-L-arabinose arabinosyl transferase (549 aa).

The next 12 membrane-spanning stretches (helical) occupy residues 9-29 (LLLIAFGLFYLVPLSNHGLWI), 80-100 (LFGVRIASVVATALSVLLAYL), 112-132 (SLACALLYASFGLIAGQSGYA), 133-153 (NLDPQFTFWVNLSLVALWHAL), 176-196 (FLTKGFLAWLLPVLVALPYML), 204-224 (LLGYGALAVLAALLVCLPWAL), 256-276 (PWWFYLPLLAVSCLPWSGLLP), 288-308 (QAPVVFLALWLLLPLAFFSLS), 312-332 (LPTYIMPCLLPLALLMGHALV), 346-366 (NGLLNLGLALLALAALAYLQL), 376-396 (FELFLVLLVIGAWAAAGLAQW), and 402-422 (AWAAPLLASWVLIALLPAAMP).

The protein belongs to the glycosyltransferase 83 family.

The protein localises to the cell inner membrane. It carries out the reaction 4-amino-4-deoxy-alpha-L-arabinopyranosyl di-trans,octa-cis-undecaprenyl phosphate + lipid IVA = lipid IIA + di-trans,octa-cis-undecaprenyl phosphate.. It functions in the pathway lipopolysaccharide metabolism; 4-amino-4-deoxy-beta-L-arabinose-lipid A biosynthesis. Functionally, catalyzes the transfer of the L-Ara4N moiety of the glycolipid undecaprenyl phosphate-alpha-L-Ara4N to lipid A. The modified arabinose is attached to lipid A and is required for resistance to polymyxin and cationic antimicrobial peptides. In Pseudomonas aeruginosa (strain LESB58), this protein is Undecaprenyl phosphate-alpha-4-amino-4-deoxy-L-arabinose arabinosyl transferase.